The sequence spans 584 residues: Probable DNA ligase (584 aa).

An ATP-binding site is contributed by E248. K250 acts as the N6-AMP-lysine intermediate in catalysis. R255, R270, E299, F339, R416, and K422 together coordinate ATP.

The protein belongs to the ATP-dependent DNA ligase family. It depends on Mg(2+) as a cofactor.

It carries out the reaction ATP + (deoxyribonucleotide)n-3'-hydroxyl + 5'-phospho-(deoxyribonucleotide)m = (deoxyribonucleotide)n+m + AMP + diphosphate.. Functionally, DNA ligase that seals nicks in double-stranded DNA during DNA replication, DNA recombination and DNA repair. This is Probable DNA ligase from Aquifex aeolicus (strain VF5).